Here is a 262-residue protein sequence, read N- to C-terminus: Triosephosphate isomerase (262 aa).

9–11 provides a ligand contact to substrate; sequence NWK. The active-site Electrophile is the histidine 99. Glutamate 171 (proton acceptor) is an active-site residue. Positions 177 and 216 each coordinate substrate.

Belongs to the triosephosphate isomerase family. Homodimer.

The protein localises to the cytoplasm. The catalysed reaction is D-glyceraldehyde 3-phosphate = dihydroxyacetone phosphate. The protein operates within carbohydrate biosynthesis; gluconeogenesis. It functions in the pathway carbohydrate degradation; glycolysis; D-glyceraldehyde 3-phosphate from glycerone phosphate: step 1/1. In terms of biological role, involved in the gluconeogenesis. Catalyzes stereospecifically the conversion of dihydroxyacetone phosphate (DHAP) to D-glyceraldehyde-3-phosphate (G3P). In Blochmanniella floridana, this protein is Triosephosphate isomerase.